Reading from the N-terminus, the 198-residue chain is Recombination protein RecR (198 aa).

A C4-type zinc finger spans residues 57-72; the sequence is CSVCGNLTDEDPCSIC. One can recognise a Toprim domain in the interval 80-175; sequence SMILVVEDSK…KVTRLARGLA (96 aa).

It belongs to the RecR family.

Its function is as follows. May play a role in DNA repair. It seems to be involved in an RecBC-independent recombinational process of DNA repair. It may act with RecF and RecO. This chain is Recombination protein RecR, found in Streptococcus uberis (strain ATCC BAA-854 / 0140J).